We begin with the raw amino-acid sequence, 118 residues long: Acidic phospholipase A2 homolog (118 aa).

Disulfide bonds link Cys-11–Cys-70, Cys-25–Cys-117, Cys-27–Cys-43, Cys-42–Cys-98, Cys-49–Cys-91, Cys-59–Cys-84, and Cys-77–Cys-89.

This sequence belongs to the phospholipase A2 family. Group I subfamily. A49 sub-subfamily. As to expression, expressed by the venom gland.

The protein resides in the secreted. In terms of biological role, snake venom phospholipase A2 (PLA2) homolog that lacks both catalytic and neurotoxicity activities. This Bungarus fasciatus (Banded krait) protein is Acidic phospholipase A2 homolog.